Consider the following 100-residue polypeptide: Large ribosomal subunit protein uL23 (100 aa).

It belongs to the universal ribosomal protein uL23 family. As to quaternary structure, part of the 50S ribosomal subunit. Contacts protein L29, and trigger factor when it is bound to the ribosome.

Functionally, one of the early assembly proteins it binds 23S rRNA. One of the proteins that surrounds the polypeptide exit tunnel on the outside of the ribosome. Forms the main docking site for trigger factor binding to the ribosome. The chain is Large ribosomal subunit protein uL23 from Mycobacterium ulcerans (strain Agy99).